The primary structure comprises 460 residues: Cysteine--tRNA ligase (460 aa).

Residue Cys28 participates in Zn(2+) binding. A 'HIGH' region motif is present at residues 30 to 40 (NTVYDFCHIGH). The Zn(2+) site is built by Cys209, His234, and Glu238. A 'KMSKS' region motif is present at residues 266–270 (KMSKS). ATP is bound at residue Lys269.

It belongs to the class-I aminoacyl-tRNA synthetase family. In terms of assembly, monomer. Requires Zn(2+) as cofactor.

Its subcellular location is the cytoplasm. It catalyses the reaction tRNA(Cys) + L-cysteine + ATP = L-cysteinyl-tRNA(Cys) + AMP + diphosphate. In Marinomonas sp. (strain MWYL1), this protein is Cysteine--tRNA ligase.